Here is a 715-residue protein sequence, read N- to C-terminus: Bromodomain-containing protein DDB_G0278469 (715 aa).

2 disordered regions span residues 18 to 46 (EDNN…NRNA) and 186 to 425 (QQQK…ETKQ). 5 stretches are compositionally biased toward low complexity: residues 20-45 (NNNN…PNRN), 186-204 (QQQK…PTAQ), 215-227 (LTAA…TTTT), 234-254 (TAPP…TTKK), and 261-281 (SKSN…TTIT). Basic and acidic residues predominate over residues 307-316 (KPKEQKKDIM). Positions 322 to 368 (SKKANTHEEKEEGESEEEEEEEEEEEEEEEEEEEEEQLEDKQKQTKT) form a coiled coil. Residues 332-359 (EEGESEEEEEEEEEEEEEEEEEEEEEQL) show a composition bias toward acidic residues. Residues 366–389 (TKTPISQNKSASSNIKPLSKTSKS) show a composition bias toward polar residues. The segment covering 405 to 414 (KKITSTTVTR) has biased composition (low complexity). Residues 437–470 (KQQTQEEIEQELKLESIRKRIEQFINKFEKEIND) are a coiled coil. In terms of domain architecture, Bromo spans 474–599 (KDLDEGKRKI…IQFYKSLLET (126 aa)). The disordered stretch occupies residues 653 to 715 (LVDEDEDECL…SEEEDQEATN (63 aa)). Positions 662 to 672 (LNNQNNPTTYD) are enriched in polar residues. Over residues 684-715 (QESDEESDEESDEESDEERDQLSEEEDQEATN) the composition is skewed to acidic residues.

The sequence is that of Bromodomain-containing protein DDB_G0278469 from Dictyostelium discoideum (Social amoeba).